The chain runs to 470 residues: ATP synthase subunit beta (470 aa).

An ATP-binding site is contributed by 158–165; sequence GGAGVGKT.

Belongs to the ATPase alpha/beta chains family. F-type ATPases have 2 components, CF(1) - the catalytic core - and CF(0) - the membrane proton channel. CF(1) has five subunits: alpha(3), beta(3), gamma(1), delta(1), epsilon(1). CF(0) has three main subunits: a(1), b(2) and c(9-12). The alpha and beta chains form an alternating ring which encloses part of the gamma chain. CF(1) is attached to CF(0) by a central stalk formed by the gamma and epsilon chains, while a peripheral stalk is formed by the delta and b chains.

It localises to the cell membrane. It catalyses the reaction ATP + H2O + 4 H(+)(in) = ADP + phosphate + 5 H(+)(out). Functionally, produces ATP from ADP in the presence of a proton gradient across the membrane. The catalytic sites are hosted primarily by the beta subunits. This Shouchella clausii (strain KSM-K16) (Alkalihalobacillus clausii) protein is ATP synthase subunit beta.